The following is a 498-amino-acid chain: Zinc finger protein 79 (498 aa).

Residues M1–E23 form a disordered region. Residues T38 to P109 form the KRAB domain. C2H2-type zinc fingers lie at residues Y193 to H215, Y221 to H243, Y249 to H271, Y277 to H299, Y305 to H327, Y333 to H355, Y361 to H383, Y389 to H411, Y417 to H439, Y445 to H467, and Y473 to H495.

It belongs to the krueppel C2H2-type zinc-finger protein family.

The protein resides in the nucleus. Its function is as follows. May be involved in transcriptional regulation. This chain is Zinc finger protein 79 (ZNF79), found in Homo sapiens (Human).